A 238-amino-acid polypeptide reads, in one-letter code: Endonuclease III homolog (238 aa).

Positions 129–155 constitute a HhH domain; the sequence is REKGLPREMKDLISLPGIGNKMALLYM. The active-site Nucleophile; for N-glycosylase activity is K149. [4Fe-4S] cluster is bound by residues C217, C224, C227, and C233.

This sequence belongs to the Nth/MutY family. [4Fe-4S] cluster serves as cofactor.

Its subcellular location is the nucleus. It localises to the mitochondrion. It catalyses the reaction 2'-deoxyribonucleotide-(2'-deoxyribose 5'-phosphate)-2'-deoxyribonucleotide-DNA = a 3'-end 2'-deoxyribonucleotide-(2,3-dehydro-2,3-deoxyribose 5'-phosphate)-DNA + a 5'-end 5'-phospho-2'-deoxyribonucleoside-DNA + H(+). Bifunctional DNA N-glycosylase with associated apurinic/apyrimidinic (AP) lyase function that catalyzes the first step in base excision repair (BER), the primary repair pathway for the repair of oxidative DNA damage. The DNA N-glycosylase activity releases the damaged DNA base from DNA by cleaving the N-glycosidic bond, leaving an AP site. The AP lyase activity cleaves the phosphodiester bond 3' to the AP site by a beta-elimination. Primarily recognizes and repairs oxidative base damage of pyrimidines. The sequence is that of Endonuclease III homolog from Encephalitozoon cuniculi (strain GB-M1) (Microsporidian parasite).